The chain runs to 500 residues: Polyenoic fatty acid isomerase (500 aa).

An N-terminal signal peptide occupies residues 1-21; sequence MSLNRVLHIFLIAYLACTALT.

As to quaternary structure, homodimer. It depends on an oxidized flavin as a cofactor. Post-translationally, glycosylated.

It catalyses the reaction (5Z,8Z,11Z,14Z,17Z)-eicosapentaenoate = (5Z,7E,9E,14Z,17Z)-icosapentaenoate. Involved in the biosynthesis of conjugated triene-containing fatty acids. Catalyzes the isomerization of a wide range of substrates containing three or more methylene interrupted olefins into a Z,E,E conjugated triene functionality. May be involved in a stress tolerance mechanism as response to intertidal habitats with direct sunlight, desiccation and high temperature. In vitro substrates include arachidonic acid ((5Z,8Z,11Z,14Z)-eicosatetraenoic acid), EPA ((5Z,8Z, 11Z,14Z,17Z)-eicosapentaenoic acid), DHA ((4Z,7Z,10Z,13Z,16Z,19Z)-docosahexenoic acid), adrenic acid ((7Z,10Z,13Z,16Z)-docosatetraenoic acid), anandamide (arachidonyl-N-ethanolamide) and eicosatrienoic acid ((5Z,8Z,11Z)-eicosatrienoic acid). Gamma-linolenic acid (18:3 6Z,9Z,12Z) and dihomo-gamma-linolenic acid (20:3 8Z,11Z,14Z) are transformed into mixtures of conjugated diene and triene fatty acids, linoleic acid is only transformed to a conjugated diene. This is Polyenoic fatty acid isomerase from Ptilota filicina (Red alga).